We begin with the raw amino-acid sequence, 476 residues long: Adenosylhomocysteinase (476 aa).

Residues T67, D142, and E202 each contribute to the substrate site. 203 to 205 (TTT) is an NAD(+) binding site. Substrate-binding residues include K232 and D236. NAD(+) is bound by residues N237, 266–271 (GYGDVG), E289, N324, 345–347 (IGH), and N390.

The protein belongs to the adenosylhomocysteinase family. The cofactor is NAD(+).

The protein localises to the cytoplasm. The enzyme catalyses S-adenosyl-L-homocysteine + H2O = L-homocysteine + adenosine. It participates in amino-acid biosynthesis; L-homocysteine biosynthesis; L-homocysteine from S-adenosyl-L-homocysteine: step 1/1. In terms of biological role, may play a key role in the regulation of the intracellular concentration of adenosylhomocysteine. The protein is Adenosylhomocysteinase of Synechococcus sp. (strain WH7803).